The sequence spans 133 residues: ATP synthase epsilon chain, chloroplastic (133 aa).

This sequence belongs to the ATPase epsilon chain family. In terms of assembly, F-type ATPases have 2 components, CF(1) - the catalytic core - and CF(0) - the membrane proton channel. CF(1) has five subunits: alpha(3), beta(3), gamma(1), delta(1), epsilon(1). CF(0) has three main subunits: a, b and c.

The protein resides in the plastid. It localises to the chloroplast thylakoid membrane. Its function is as follows. Produces ATP from ADP in the presence of a proton gradient across the membrane. This is ATP synthase epsilon chain, chloroplastic from Chara vulgaris (Common stonewort).